A 192-amino-acid chain; its full sequence is Protein ORF45 (192 aa).

Plays a role in the expression of ORF41, which itself is required for late gene expression. The chain is Protein ORF45 from Autographa californica nuclear polyhedrosis virus (AcMNPV).